A 240-amino-acid chain; its full sequence is Probable transcriptional regulatory protein MADE_1004275 (240 aa).

This sequence belongs to the TACO1 family.

The protein resides in the cytoplasm. This chain is Probable transcriptional regulatory protein MADE_1004275, found in Alteromonas mediterranea (strain DSM 17117 / CIP 110805 / LMG 28347 / Deep ecotype).